Reading from the N-terminus, the 501-residue chain is L-aspartate decarboxylase dtxS4 (501 aa).

106 to 108 (KLT) lines the substrate pocket. At lysine 320 the chain carries N6-(pyridoxal phosphate)lysine. Arginine 474 contacts substrate.

The protein belongs to the group II decarboxylase family. The cofactor is pyridoxal 5'-phosphate.

It catalyses the reaction L-aspartate + H(+) = beta-alanine + CO2. Its pathway is secondary metabolite biosynthesis. In terms of biological role, L-aspartate decarboxylase; part of the gene cluster that mediates the biosynthesis of destruxins, insecticidal cyclic hexadepsipeptides which induce flaccid paralysis and visceral muscle contraction in insects through targeting the calcium channels and vacuolar-type ATPases. The aldo-keto reductase dtxS3 converts alpha-ketoisocaproic acid from deaminated leucine into alpha-hydroxyisocaproic acid (HIC), which is the first substrate for destruxin assembly by dtxS1. L-aspartate decarboxylase dtxS4 converts aspartic acid into beta-alanine, the last substrate for the destruxin assembly line performed by dtxS1. The nonribosomal peptide synthetase dtxS1 synthesizes destruxins B and B2, whereas the cytochrome P450 monooxygenase dtxS2 is required to convert destruxin B into other destruxin derivatives, including destructins C, D, A and E. Destruxin E-diol (ED) is further produced in a non-enzymatic manner from destruxin E. Destruxins play an important role in virulence and escape from insect host immune defenses. This is L-aspartate decarboxylase dtxS4 from Metarhizium robertsii (strain ARSEF 23 / ATCC MYA-3075) (Metarhizium anisopliae (strain ARSEF 23)).